A 124-amino-acid polypeptide reads, in one-letter code: Small ribosomal subunit protein uS12 (124 aa).

Position 89 is a 3-methylthioaspartic acid (aspartate 89).

This sequence belongs to the universal ribosomal protein uS12 family. As to quaternary structure, part of the 30S ribosomal subunit. Contacts proteins S8 and S17. May interact with IF1 in the 30S initiation complex.

Functionally, with S4 and S5 plays an important role in translational accuracy. In terms of biological role, interacts with and stabilizes bases of the 16S rRNA that are involved in tRNA selection in the A site and with the mRNA backbone. Located at the interface of the 30S and 50S subunits, it traverses the body of the 30S subunit contacting proteins on the other side and probably holding the rRNA structure together. The combined cluster of proteins S8, S12 and S17 appears to hold together the shoulder and platform of the 30S subunit. The protein is Small ribosomal subunit protein uS12 of Erwinia amylovora (Fire blight bacteria).